A 428-amino-acid chain; its full sequence is GTPase Obg (428 aa).

Positions 1–158 (MFVDQTKIDV…RTLRLELKVL (158 aa)) constitute an Obg domain. Residues 159-328 (ADVGLVGFPS…LMGKTADLVE (170 aa)) form the OBG-type G domain. Residues 165 to 172 (GFPSVGKS), 190 to 194 (FTTLT), 212 to 215 (DLPG), 282 to 285 (TQMD), and 309 to 311 (SSV) each bind GTP. Mg(2+) contacts are provided by Ser172 and Thr192. One can recognise an OCT domain in the interval 350 to 428 (YKKPEDDGFK…IADFTFEFVD (79 aa)).

The protein belongs to the TRAFAC class OBG-HflX-like GTPase superfamily. OBG GTPase family. In terms of assembly, monomer. Mg(2+) serves as cofactor.

It is found in the cytoplasm. An essential GTPase which binds GTP, GDP and possibly (p)ppGpp with moderate affinity, with high nucleotide exchange rates and a fairly low GTP hydrolysis rate. Plays a role in control of the cell cycle, stress response, ribosome biogenesis and in those bacteria that undergo differentiation, in morphogenesis control. The chain is GTPase Obg from Lactobacillus gasseri (strain ATCC 33323 / DSM 20243 / BCRC 14619 / CIP 102991 / JCM 1131 / KCTC 3163 / NCIMB 11718 / NCTC 13722 / AM63).